The chain runs to 378 residues: Alpha-galactosidase (378 aa).

Positions 1–15 (MVKSPGTEDYTRRSL) are cleaved as a signal peptide. Disulfide bonds link cysteine 36–cysteine 68 and cysteine 116–cysteine 147. Aspartate 145 acts as the Nucleophile in catalysis. Residue 178–182 (EWGEE) coordinates substrate. Catalysis depends on aspartate 200, which acts as the Proton donor.

Belongs to the glycosyl hydrolase 27 family.

The enzyme catalyses Hydrolysis of terminal, non-reducing alpha-D-galactose residues in alpha-D-galactosides, including galactose oligosaccharides, galactomannans and galactolipids.. In terms of biological role, preferentially cleaves alpha-1,3 and alpha-1,4 glycoside linkages. Involved in the hydrolysis of the galactomannan, it splits alpha-linked galactose moieties. It is particularly suitable for the hydrolysis of guar gum to a gum with improved gelling properties. Can cleave terminal alpha-1,3-linked galactose residues responsible for blood group B specificity from the surface of erythrocytes thereby converting these cells serologically to group O. The sequence is that of Alpha-galactosidase from Coffea arabica (Arabian coffee).